A 216-amino-acid chain; its full sequence is Somatotropin (216 aa).

The first 25 residues, 1–25 (MAPGSWFSPLFITVITLGLQWPQEA), serve as a signal peptide directing secretion. A Zn(2+)-binding site is contributed by His46. Cys78 and Cys189 are oxidised to a cystine. Glu198 lines the Zn(2+) pocket. Cys206 and Cys214 are oxidised to a cystine.

It belongs to the somatotropin/prolactin family.

The protein resides in the secreted. Growth hormone plays an important role in growth control. The sequence is that of Somatotropin (GH) from Anas platyrhynchos (Mallard).